Consider the following 166-residue polypeptide: Desiccation-related protein At2g46140 (166 aa).

It belongs to the LEA type 2 family.

The chain is Desiccation-related protein At2g46140 from Arabidopsis thaliana (Mouse-ear cress).